A 932-amino-acid chain; its full sequence is Isoleucine--tRNA ligase (932 aa).

The 'HIGH' region motif lies at 57–67; that stretch reads PYANGDIHMGH. Position 556 (Glu556) interacts with L-isoleucyl-5'-AMP. A 'KMSKS' region motif is present at residues 597–601; it reads KMSKS. Lys600 is a binding site for ATP. Residues Cys891, Cys894, Cys911, and Cys914 each contribute to the Zn(2+) site.

It belongs to the class-I aminoacyl-tRNA synthetase family. IleS type 1 subfamily. As to quaternary structure, monomer. The cofactor is Zn(2+).

The protein localises to the cytoplasm. The catalysed reaction is tRNA(Ile) + L-isoleucine + ATP = L-isoleucyl-tRNA(Ile) + AMP + diphosphate. Functionally, catalyzes the attachment of isoleucine to tRNA(Ile). As IleRS can inadvertently accommodate and process structurally similar amino acids such as valine, to avoid such errors it has two additional distinct tRNA(Ile)-dependent editing activities. One activity is designated as 'pretransfer' editing and involves the hydrolysis of activated Val-AMP. The other activity is designated 'posttransfer' editing and involves deacylation of mischarged Val-tRNA(Ile). This is Isoleucine--tRNA ligase from Lactiplantibacillus plantarum (strain ATCC BAA-793 / NCIMB 8826 / WCFS1) (Lactobacillus plantarum).